We begin with the raw amino-acid sequence, 52 residues long: MSIFKSLLSMGMNNSNSNSQSIVYNENRLNSFQSKNEIMVSISNPINPSQKK.

This is an uncharacterized protein from Dictyostelium discoideum (Social amoeba).